The following is a 416-amino-acid chain: Enterobactin exporter EntS (416 aa).

Topologically, residues 1 to 21 are cytoplasmic; it reads MNKQSWLLNLSLLKTHPAFRA. Residues 22–42 traverse the membrane as a helical segment; sequence VFLARFISIVSLGLLGVAVPV. Residues 43 to 55 are Periplasmic-facing; the sequence is QIQIMTHSTWQVG. The helical transmembrane segment at 56–76 threads the bilayer; sequence LSVTLTGGAMFVGLMVGGVLA. Over 77-83 the chain is Cytoplasmic; that stretch reads DRYERKK. A helical transmembrane segment spans residues 84–104; it reads VILLARGTCGIGFIGLCLNAL. The Periplasmic portion of the chain corresponds to 105-109; the sequence is LPEPS. The chain crosses the membrane as a helical span at residues 110-130; it reads LLAIYLLGLWDGFFASLGVTA. The Cytoplasmic segment spans residues 131–156; that stretch reads LLAATPALVGRENLMQAGAITMLTVR. The helical transmembrane segment at 157–177 threads the bilayer; it reads LGSVISPMIGGLLLATGGVAW. Residue N178 is a topological domain, periplasmic. Residues 179 to 199 traverse the membrane as a helical segment; sequence YGLAAAGTFITLLPLLSLPAL. The Cytoplasmic segment spans residues 200 to 218; it reads PPPPQPREHPLKSLLAGFR. Residues 219–239 form a helical membrane-spanning segment; that stretch reads FLLASPLVGGIALLGGLLTMA. The Periplasmic segment spans residues 240-256; it reads SAVRVLYPALADNWQMS. A helical membrane pass occupies residues 257–277; sequence AAQIGFLYAAIPLGAAIGALT. The Cytoplasmic portion of the chain corresponds to 278 to 287; that stretch reads SGKLAHSVRP. A helical transmembrane segment spans residues 288 to 307; sequence GLLMLLSTLGAFLAIGLFGL. Residues 308–313 lie on the Periplasmic side of the membrane; sequence MPMWIL. A helical membrane pass occupies residues 314–336; sequence GVVCLALFGWLSAVSSLLQYTML. The Cytoplasmic segment spans residues 337 to 356; the sequence is QTQTPEAMLGRINGLWTAQN. Residues 357–377 traverse the membrane as a helical segment; sequence VTGDAIGAALLGGLGAMMTPV. Residue A378 is a topological domain, periplasmic. Residues 379–399 form a helical membrane-spanning segment; that stretch reads SASASGFGLLIIGVLLLLVLV. At 400–416 the chain is on the cytoplasmic side; sequence ELRRFRQTPPQVTASDS.

Belongs to the major facilitator superfamily. EntS (TC 2.A.1.38) family.

It localises to the cell inner membrane. Its function is as follows. Component of an export pathway for enterobactin. This Escherichia coli O127:H6 (strain E2348/69 / EPEC) protein is Enterobactin exporter EntS.